The primary structure comprises 253 residues: Cyclin-C1-2 (253 aa).

The protein belongs to the cyclin family. Cyclin C subfamily.

The protein is Cyclin-C1-2 (CYCC1-2) of Arabidopsis thaliana (Mouse-ear cress).